The following is a 249-amino-acid chain: Protein TIFY 10B (249 aa).

In terms of domain architecture, Tify spans P113–K148. The Jas motif lies at P204–Q229. The Nuclear localization signal signature appears at A206–R213. A disordered region spans residues K225–R249. A compositionally biased stretch (polar residues) spans E235–R249.

The protein belongs to the TIFY/JAZ family. Homo- and heterodimer. Interacts with COI1, MYC2, MYC3, MYC4, AFPH2/NINJA, TIFY10A/JAZ1, TIFY6B/JAZ3, TIFY11A/JAZ5, TIFY11B/JAZ6, TIFY5A/JAZ8, TIFY7/JAZ9, TIFY9/JAZ10, TIFY3A/JAZ11 and TIFY3B/JAZ12. Interacts with RHD6 and RSL1. In terms of assembly, (Microbial infection) Interacts with the pathogenic Pseudomonas syringae HopZ1a protein. In terms of processing, (Microbial infection) Acetylated by Pseudomonas syringae HopZ1a. Ubiquitinated. Targeted for degradation by the SCF(COI1) E3 ubiquitin ligase-proteasome pathway during jasmonate signaling. As to expression, expressed in cotyledons, hypocotyls, roots, sepals, petal vascular tissue and stigmas of developing flowers. Expressed in stamen filaments after jasmonic acid treatment.

The protein localises to the nucleus. Its function is as follows. Repressor of jasmonate responses. Jasmonoyl-isoleucine (JA-Ile) specifically promotes COI1-TIFY10B/JAZ2 interaction. Activated by MYC2, MYC3 and MYC4 transcription factors. Interacts with and suppresses RHD6 and RSL1 transcription factor activities to negatively regulate jasmonate-stimulated root hair development. This Arabidopsis thaliana (Mouse-ear cress) protein is Protein TIFY 10B.